Reading from the N-terminus, the 994-residue chain is Glutamate [NMDA] receptor subunit 1 (994 aa).

The N-terminal stretch at 1 to 23 (MAADGFVYRWLLFGTTIVLLAEA) is a signal peptide. Over 24-570 (AQRHTASDNP…TLVSFLQPFS (547 aa)) the chain is Extracellular. N255, N311, N342, N394, N451, N478, and N498 each carry an N-linked (GlcNAc...) asparagine glycan. Glycine-binding positions include 527-529 (PLT) and R534. Residues 571-591 (NTLWILVMVSVHVVALVLYLL) form a helical membrane-spanning segment. Topologically, residues 592–648 (DRFSPFGRFKLSHSDSNEEKALNLSSAVWFAWGVLLNSGIGEGTPRSFSARVLGMVW) are cytoplasmic. Residues 649–669 (AGFAMIIVASYTANLAAFLVL) traverse the membrane as a helical segment. Residues 670–828 (ERPKTKLSGI…KTPNTLGLKN (159 aa)) are Extracellular-facing. Residue N690 is glycosylated (N-linked (GlcNAc...) asparagine). Positions 700 and 744 each coordinate glycine. Residues 829–849 (MAGVFILVGVGIAGGVGLIII) form a helical membrane-spanning segment. The Cytoplasmic portion of the chain corresponds to 850 to 994 (EVIYKKHQVK…YTSDVSHLVV (145 aa)). The tract at residues 971–994 (RPQQNMLPPRYSPGYTSDVSHLVV) is disordered. Positions 984 to 994 (GYTSDVSHLVV) are enriched in polar residues.

It belongs to the glutamate-gated ion channel (TC 1.A.10.1) family. As to quaternary structure, forms a heteromeric NMDA channel with Nmdar2.

Its subcellular location is the cell membrane. It is found in the postsynaptic cell membrane. The protein resides in the postsynaptic density. Functionally, NMDA receptor subtype of glutamate-gated ion channels with high calcium permeability and voltage-dependent sensitivity to magnesium. Mediated by glycine. This protein plays a key role in synaptic plasticity, synaptogenesis, excitotoxicity, memory acquisition and learning. It mediates neuronal functions in glutamate neurotransmission. Is involved in the cell surface targeting of NMDA receptors. Plays a role in associative learning and in long-term memory consolidation. The chain is Glutamate [NMDA] receptor subunit 1 from Drosophila ananassae (Fruit fly).